Reading from the N-terminus, the 412-residue chain is Argininosuccinate synthase (412 aa).

ATP contacts are provided by residues 16–24 (AYSGGLDTS) and alanine 44. Tyrosine 96 and serine 101 together coordinate L-citrulline. Residue glycine 126 coordinates ATP. L-aspartate contacts are provided by threonine 128, asparagine 132, and aspartate 133. Asparagine 132 serves as a coordination point for L-citrulline. Positions 136, 185, 194, 270, and 282 each coordinate L-citrulline.

The protein belongs to the argininosuccinate synthase family. Type 1 subfamily. Homotetramer.

The protein resides in the cytoplasm. The enzyme catalyses L-citrulline + L-aspartate + ATP = 2-(N(omega)-L-arginino)succinate + AMP + diphosphate + H(+). Its pathway is amino-acid biosynthesis; L-arginine biosynthesis; L-arginine from L-ornithine and carbamoyl phosphate: step 2/3. This Shewanella baltica (strain OS195) protein is Argininosuccinate synthase.